A 208-amino-acid polypeptide reads, in one-letter code: Small ribosomal subunit protein uS4 (208 aa).

The 64-residue stretch at 98–161 folds into the S4 RNA-binding domain; that stretch reads RRLDNVVYRL…RKSKRFKEVF (64 aa).

It belongs to the universal ribosomal protein uS4 family. As to quaternary structure, part of the 30S ribosomal subunit. Contacts protein S5. The interaction surface between S4 and S5 is involved in control of translational fidelity.

In terms of biological role, one of the primary rRNA binding proteins, it binds directly to 16S rRNA where it nucleates assembly of the body of the 30S subunit. Its function is as follows. With S5 and S12 plays an important role in translational accuracy. The chain is Small ribosomal subunit protein uS4 from Halothermothrix orenii (strain H 168 / OCM 544 / DSM 9562).